We begin with the raw amino-acid sequence, 197 residues long: Segregation and condensation protein B (197 aa).

It belongs to the ScpB family. In terms of assembly, homodimer. Homodimerization may be required to stabilize the binding of ScpA to the Smc head domains. Component of a cohesin-like complex composed of ScpA, ScpB and the Smc homodimer, in which ScpA and ScpB bind to the head domain of Smc. The presence of the three proteins is required for the association of the complex with DNA.

It is found in the cytoplasm. Its function is as follows. Participates in chromosomal partition during cell division. May act via the formation of a condensin-like complex containing Smc and ScpA that pull DNA away from mid-cell into both cell halves. The sequence is that of Segregation and condensation protein B from Bacillus licheniformis (strain ATCC 14580 / DSM 13 / JCM 2505 / CCUG 7422 / NBRC 12200 / NCIMB 9375 / NCTC 10341 / NRRL NRS-1264 / Gibson 46).